Here is a 219-residue protein sequence, read N- to C-terminus: Transmembrane protein 125 (219 aa).

A run of 4 helical transmembrane segments spans residues 36–56 (LCFA…VALL), 68–88 (LAVG…QLMS), 114–134 (ALVV…LAGL), and 147–167 (MLSV…GLLL).

The protein localises to the membrane. The protein is Transmembrane protein 125 (TMEM125) of Bos taurus (Bovine).